A 509-amino-acid polypeptide reads, in one-letter code: Oligo-1,6-glucosidase (509 aa).

D198 acts as the Nucleophile in catalysis. Catalysis depends on E254, which acts as the Proton donor.

It belongs to the glycosyl hydrolase 13 family.

It localises to the cytoplasm. It catalyses the reaction Hydrolysis of (1-&gt;6)-alpha-D-glucosidic linkages in some oligosaccharides produced from starch and glycogen by alpha-amylase, and in isomaltose.. This is Oligo-1,6-glucosidase (malL) from Bacillus sp. (strain F5).